Here is a 670-residue protein sequence, read N- to C-terminus: Putative segment polarity protein dishevelled homolog DVL1P1 (670 aa).

Residues 1-85 enclose the DIX domain; sequence MAETKIIYHM…RVVSWLVLVE (85 aa). The disordered stretch occupies residues 89–240; sequence SDAGSQGTDS…ADRASSFSSM (152 aa). A compositionally biased stretch (basic residues) spans 142–151; the sequence is SHRRDRARRR. The span at 152–171 shows a compositional bias: basic and acidic residues; that stretch reads NREEAARTNGHPRGDRRRDV. 2 stretches are compositionally biased toward low complexity: residues 176–192 and 201–214; these read DSAS…SSFV and SRLS…TSSR. Residues 215–228 show a composition bias toward basic residues; sequence LIRKHKRRRRKQRL. In terms of domain architecture, PDZ spans 251 to 323; sequence TVTLNMERHH…NDDAVRVLRE (73 aa). The region spanning 400 to 474 is the DEP domain; sequence PDSGLEIRDR…SEQCYYVFGD (75 aa). The tract at residues 518–642 is disordered; sequence PGPPPCFPPA…PGGPPVRELA (125 aa). 2 stretches are compositionally biased toward low complexity: residues 526–553 and 600–614; these read PAYQ…SSGS and SRGS…SYAP.

This sequence belongs to the DSH family. As to expression, expressed in thymus, heart, liver, kidney, brain, skeletal muscle, and pancreas.

The protein localises to the cytoplasm. Its function is as follows. May play a role in the signal transduction pathway mediated by multiple Wnt genes. This chain is Putative segment polarity protein dishevelled homolog DVL1P1 (DVL1P1), found in Homo sapiens (Human).